Consider the following 1217-residue polypeptide: CST complex subunit CTC1 (1217 aa).

Residues 327–346 form a disordered region; that stretch reads LEADPKPLPTPSNSEDKKDP.

The protein belongs to the CTC1 family. Component of the CST complex, composed of TEN1/C17orf106, CTC1/C17orf68 and STN1; in the complex interacts directly with STN1. Interacts with ACD and POT1.

It localises to the nucleus. It is found in the chromosome. The protein localises to the telomere. Its function is as follows. Component of the CST complex proposed to act as a specialized replication factor promoting DNA replication under conditions of replication stress or natural replication barriers such as the telomere duplex. The CST complex binds single-stranded DNA with high affinity in a sequence-independent manner, while isolated subunits bind DNA with low affinity by themselves. Initially the CST complex has been proposed to protect telomeres from DNA degradation. However, the CST complex has been shown to be involved in several aspects of telomere replication. The CST complex inhibits telomerase and is involved in telomere length homeostasis; it is proposed to bind to newly telomerase-synthesized 3' overhangs and to terminate telomerase action implicating the association with the ACD:POT1 complex thus interfering with its telomerase stimulation activity. The CST complex is also proposed to be involved in fill-in synthesis of the telomeric C-strand probably implicating recruitment and activation of DNA polymerase alpha. The CST complex facilitates recovery from many forms of exogenous DNA damage; seems to be involved in the re-initiation of DNA replication at repaired forks and/or dormant origins. Involved in telomere maintenance. Involved in genome stability. May be in involved in telomeric C-strand fill-in during late S/G2 phase. This chain is CST complex subunit CTC1 (CTC1), found in Pongo abelii (Sumatran orangutan).